The sequence spans 139 residues: 10 kDa chaperonin 2, chloroplastic (139 aa).

A chloroplast-targeting transit peptide spans 1–39 (MASTFVCSLPNPFFAFPVKATTPSTANHTLLGSRRGCLR). The tract at residues 51 to 138 (KVVPQADRVL…CKESDLLALV (88 aa)) is cpn-10 domain.

Belongs to the GroES chaperonin family. As to expression, expressed in leaves and stems. Expressed at low levels in germinating seeds, seedlings, rosettes leaves, flowers and siliques.

The protein localises to the plastid. The protein resides in the chloroplast stroma. In terms of biological role, functions as a co-chaperone for protein folding in chloroplasts. The sequence is that of 10 kDa chaperonin 2, chloroplastic from Arabidopsis thaliana (Mouse-ear cress).